Consider the following 239-residue polypeptide: Small ribosomal subunit protein uS3 (239 aa).

The region spanning Ile-39–Arg-107 is the KH type-2 domain. Positions Ala-214–Ala-239 are disordered.

The protein belongs to the universal ribosomal protein uS3 family. In terms of assembly, part of the 30S ribosomal subunit. Forms a tight complex with proteins S10 and S14.

Its function is as follows. Binds the lower part of the 30S subunit head. Binds mRNA in the 70S ribosome, positioning it for translation. The chain is Small ribosomal subunit protein uS3 from Methylocella silvestris (strain DSM 15510 / CIP 108128 / LMG 27833 / NCIMB 13906 / BL2).